Consider the following 393-residue polypeptide: UDP-galactose translocator (393 aa).

Helical transmembrane passes span 3 to 23, 37 to 57, 65 to 85, 97 to 117, 140 to 160, 169 to 189, 200 to 220, 238 to 258, 269 to 289, and 315 to 335; these read AVGS…AGAL, YISL…IRYA, FFAT…CLLL, LVLF…KLAV, TFQV…VLML, WASL…QAGG, GVGL…GVYF, LGLF…GTAV, PAVW…AVVV, and LFGF…IGAV. The interval 353-393 is disordered; the sequence is APTSGPCTHQQPPGQPPPPQLSSHHGDLSTEPFLPKSVLVK.

Belongs to the nucleotide-sugar transporter family. SLC35A subfamily. In terms of assembly, interacts with SLC35A3; the interaction is reduced in the presence of SLC35A4. Found in a complex with SLC35A3 and SLC35A4.

Its subcellular location is the golgi apparatus membrane. The catalysed reaction is UMP(out) + UDP-alpha-D-galactose(in) = UMP(in) + UDP-alpha-D-galactose(out). The enzyme catalyses UDP-N-acetyl-alpha-D-galactosamine(in) + UMP(out) = UDP-N-acetyl-alpha-D-galactosamine(out) + UMP(in). It catalyses the reaction UMP(out) + UDP-alpha-D-glucose(in) = UMP(in) + UDP-alpha-D-glucose(out). It carries out the reaction UMP(out) + UDP-N-acetyl-alpha-D-glucosamine(in) = UMP(in) + UDP-N-acetyl-alpha-D-glucosamine(out). The catalysed reaction is UDP-alpha-D-galactose(in) + AMP(out) = UDP-alpha-D-galactose(out) + AMP(in). The enzyme catalyses UDP-alpha-D-galactose(in) + CMP(out) = UDP-alpha-D-galactose(out) + CMP(in). It catalyses the reaction UDP-N-acetyl-alpha-D-galactosamine(out) + UDP-alpha-D-galactose(in) = UDP-N-acetyl-alpha-D-galactosamine(in) + UDP-alpha-D-galactose(out). It carries out the reaction UDP-N-acetyl-alpha-D-glucosamine(out) + UDP-alpha-D-galactose(in) = UDP-N-acetyl-alpha-D-glucosamine(in) + UDP-alpha-D-galactose(out). The catalysed reaction is UDP-alpha-D-galactose(in) + UDP-alpha-D-glucose(out) = UDP-alpha-D-galactose(out) + UDP-alpha-D-glucose(in). The enzyme catalyses UMP(out) + CMP(in) = UMP(in) + CMP(out). It catalyses the reaction UMP(out) + AMP(in) = UMP(in) + AMP(out). Its function is as follows. Transports uridine diphosphate galactose (UDP-galactose) from the cytosol into the Golgi apparatus, functioning as an antiporter that exchanges UDP-galactose for UMP. It is also able to exchange UDP-galactose for AMP and CMP, and to transport UDP-N-acetylgalactosamine (UDP-GalNAc) and other nucleotide sugars. As a provider of UDP-galactose to galactosyltransferases present in the Golgi apparatus, it is necessary for globotriaosylceramide/globoside (Gb3Cer) synthesis from lactosylceramide. This Bos taurus (Bovine) protein is UDP-galactose translocator.